The following is a 347-amino-acid chain: NADH-ubiquinone oxidoreductase chain 2 (347 aa).

Transmembrane regions (helical) follow at residues 1 to 21 (MNPLIFSTILATIIMGTVIVM), 25 to 45 (HWLTIWIGFEMNMLAIIPMLM), 59 to 79 (YFLTQATASMLLMLAVIINLT), 96 to 116 (IIMTIALTMKLGLSPFHFWVP), 127 to 147 (CLILLTWQKLAPLSILYMISP), 149 to 169 (INLNLLLSMSLISIAIGGWGG), 178 to 198 (IMAYSSIAHMGWMTAVLAYNP), 200 to 220 (MTMLNLLVYITMTTTMFMLLI), 237 to 257 (IPLVTTLTLTIMLSLGGLPPL), 276 to 296 (IILPTLMAIMALLSLYFYMRL), and 325 to 345 (LLSPLIVTSTLTLPLAPTMLL).

This sequence belongs to the complex I subunit 2 family. Core subunit of respiratory chain NADH dehydrogenase (Complex I) which is composed of 45 different subunits. Interacts with TMEM242.

Its subcellular location is the mitochondrion inner membrane. It catalyses the reaction a ubiquinone + NADH + 5 H(+)(in) = a ubiquinol + NAD(+) + 4 H(+)(out). In terms of biological role, core subunit of the mitochondrial membrane respiratory chain NADH dehydrogenase (Complex I) which catalyzes electron transfer from NADH through the respiratory chain, using ubiquinone as an electron acceptor. Essential for the catalytic activity and assembly of complex I. This is NADH-ubiquinone oxidoreductase chain 2 from Natalus tumidirostris (Trinidadian funnel-eared bat).